The chain runs to 296 residues: Cleavage and polyadenylation specificity factor subunit 4 (296 aa).

5 consecutive C3H1-type zinc fingers follow at residues 35–63 (KSIA…RHIR), 64–91 (GDRT…HEYD), 92–119 (MTKM…HIDP), 120–147 (QSKV…HLRR), and 149–171 (LCMD…HPHF). The segment at 189–206 (PTCHYCGELGHKANSCKQ) adopts a CCHC-type 1 zinc-finger fold. Positions 222 to 254 (HSGGHSGGYSGHSGHIEGADDMQSNHHSQPHGP) are disordered. A CCHC-type 2 zinc finger spans residues 266 to 283 (ITCYKCGNKGHYANKCPK).

Component of the cleavage and polyadenylation specificity factor (CPSF) complex, composed of at least Clp, Cpsf73, Cpsf100 and Cpsf160. In terms of tissue distribution, during oogenesis, expression is detected in the germarium, in nurse cells, in the oocyte, and in the somatically derived follicular epithelial cells (at protein level). At oogenesis stage 12, nurse cells degenerate and their content is transferred into the oocyte. In larvae, expressed in all organs and disks (at protein level). In the larval salivary gland, expression is initially confined to cells at the anterior end but later expands throughout the entire gland (at protein level).

It localises to the nucleus. In terms of biological role, component of the cleavage and polyadenylation specificity factor (CPSF) complex that plays a key role in pre-mRNA 3'-end formation, recognizing the AAUAAA signal sequence and interacting with poly(A) polymerase and other factors to bring about cleavage and poly(A) addition. Has endonuclease activity. Binds RNA polymers with a preference for G- and/or C-rich clusters. Binds single-stranded DNA non-specifically. This Drosophila melanogaster (Fruit fly) protein is Cleavage and polyadenylation specificity factor subunit 4 (Clp).